A 107-amino-acid chain; its full sequence is Iron-binding protein IscA (107 aa).

Fe cation contacts are provided by C35, C99, and C101.

This sequence belongs to the HesB/IscA family. As to quaternary structure, homodimer; may form tetramers and higher multimers. Fe cation is required as a cofactor.

Functionally, is able to transfer iron-sulfur clusters to apo-ferredoxin. Multiple cycles of [2Fe2S] cluster formation and transfer are observed, suggesting that IscA acts catalytically. Recruits intracellular free iron so as to provide iron for the assembly of transient iron-sulfur cluster in IscU in the presence of IscS, L-cysteine and the thioredoxin reductase system TrxA/TrxB. The chain is Iron-binding protein IscA from Xenorhabdus nematophila (strain ATCC 19061 / DSM 3370 / CCUG 14189 / LMG 1036 / NCIMB 9965 / AN6).